The chain runs to 278 residues: Undecaprenyl-diphosphatase (278 aa).

6 consecutive transmembrane segments (helical) span residues 44 to 64, 84 to 104, 112 to 132, 187 to 207, 224 to 244, and 254 to 274; these read FLEMFNIVIQLGAILAVMTIY, WQLWAKVVIACIPSILIAVPL, FNFMVPIAIALIVYGIAFIWI, SVAADFTFFLGIPTMFGYSGL, VWILLVASVTAYLVSLVVIRF, and FTVFGYYRIILGAILLVYAFI.

It belongs to the UppP family.

The protein resides in the cell membrane. The catalysed reaction is di-trans,octa-cis-undecaprenyl diphosphate + H2O = di-trans,octa-cis-undecaprenyl phosphate + phosphate + H(+). Functionally, catalyzes the dephosphorylation of undecaprenyl diphosphate (UPP). Confers resistance to bacitracin. The sequence is that of Undecaprenyl-diphosphatase from Streptococcus suis (strain 98HAH33).